A 1199-amino-acid polypeptide reads, in one-letter code: Tubulin monoglutamylase TTLL4 (1199 aa).

The span at 1 to 25 shows a compositional bias: polar residues; the sequence is MASAGTQHYSIGLRQKNSFKQSGPS. Disordered stretches follow at residues 1-43, 472-517, and 525-544; these read MASA…RVWP, IQLG…ELVD, and RDEN…SAVS. Basic and acidic residues predominate over residues 477 to 495; it reads SEKERPEEARELDSSDRDI. The span at 506 to 517 shows a compositional bias: acidic residues; it reads AETEDTEEELVD. The TTL domain occupies 604 to 947; the sequence is RKLLRWKMST…VLPNAEDIIS (344 aa). Ser691 carries the post-translational modification Phosphoserine. ATP-binding positions include Lys721, 727–728, 749–752, and 762–764; these read RG, QRYL, and KFD. Arg727 provides a ligand contact to a protein. Arg788 is an L-glutamate binding site. 809-810 is a binding site for ATP; the sequence is TN. Residues Tyr811, Ser812, and Lys833 each contribute to the L-glutamate site. Mg(2+) contacts are provided by Asp893, Glu906, and Asn908. Residues 918-1029 are c-MTBD region; that stretch reads PLDISIKGQM…RGQFERIFPS (112 aa). Lys924 contacts L-glutamate. A compositionally biased stretch (polar residues) spans 1130-1141; sequence GTTPKSKKTQAG. The tract at residues 1130-1199 is disordered; it reads GTTPKSKKTQ…ISDSLLAVSP (70 aa). The segment covering 1151 to 1160 has biased composition (basic and acidic residues); sequence SSKDSEDTSK. Over residues 1164–1192 the composition is skewed to polar residues; that stretch reads LSTQTLPVIKCSGQTSRLSASSTFQSISD.

This sequence belongs to the tubulin--tyrosine ligase family. The cofactor is Mg(2+).

Its subcellular location is the cytoplasm. The protein localises to the cell projection. It is found in the cilium. The protein resides in the cytoskeleton. It localises to the cilium basal body. The catalysed reaction is L-glutamyl-[protein] + L-glutamate + ATP = gamma-L-glutamyl-L-glutamyl-[protein] + ADP + phosphate + H(+). Functionally, monoglutamylase which modifies both tubulin and non-tubulin proteins, adding a single glutamate on the gamma-carboxyl group of specific glutamate residues of target proteins. Involved in the side-chain initiation step of the polyglutamylation reaction but not in the elongation step. Preferentially modifies beta-tail tubulin over the alpha-tubulin. Monoglutamylates nucleosome assembly proteins NAP1L1 and NAP1L4. Monoglutamylates nucleotidyltransferase CGAS, leading to inhibition of CGAS catalytic activity, thereby preventing antiviral defense function. Involved in KLF4 glutamylation which impedes its ubiquitination, thereby leading to somatic cell reprogramming, pluripotency maintenance and embryogenesis. This is Tubulin monoglutamylase TTLL4 from Homo sapiens (Human).